A 342-amino-acid polypeptide reads, in one-letter code: Tetraacyldisaccharide 4'-kinase (342 aa).

Residue threonine 68–threonine 75 participates in ATP binding.

Belongs to the LpxK family.

The enzyme catalyses a lipid A disaccharide + ATP = a lipid IVA + ADP + H(+). It functions in the pathway glycolipid biosynthesis; lipid IV(A) biosynthesis; lipid IV(A) from (3R)-3-hydroxytetradecanoyl-[acyl-carrier-protein] and UDP-N-acetyl-alpha-D-glucosamine: step 6/6. Its function is as follows. Transfers the gamma-phosphate of ATP to the 4'-position of a tetraacyldisaccharide 1-phosphate intermediate (termed DS-1-P) to form tetraacyldisaccharide 1,4'-bis-phosphate (lipid IVA). The polypeptide is Tetraacyldisaccharide 4'-kinase (Burkholderia pseudomallei (strain K96243)).